Consider the following 299-residue polypeptide: Large ribosomal subunit protein eL22 (299 aa).

Disordered stretches follow at residues methionine 1–alanine 142 and valine 155–valine 178. Composition is skewed to basic and acidic residues over residues glycine 33 to alanine 42 and lysine 55 to lysine 64. 2 stretches are compositionally biased toward low complexity: residues alanine 65 to alanine 98 and alanine 105 to alanine 142.

This sequence belongs to the eukaryotic ribosomal protein eL22 family.

This chain is Large ribosomal subunit protein eL22 (RpL22), found in Drosophila melanogaster (Fruit fly).